The primary structure comprises 608 residues: Glutamine--fructose-6-phosphate aminotransferase [isomerizing] (608 aa).

The Nucleophile; for GATase activity role is filled by Cys-2. Residues 2-217 (CGIVGIVGNQ…DGDWAVIGKT (216 aa)) form the Glutamine amidotransferase type-2 domain. SIS domains are found at residues 281-422 (ISDA…ARGT) and 456-598 (LSRE…VDQP). The active-site For Fru-6P isomerization activity is Lys-603.

As to quaternary structure, homodimer.

The protein localises to the cytoplasm. It carries out the reaction D-fructose 6-phosphate + L-glutamine = D-glucosamine 6-phosphate + L-glutamate. Its function is as follows. Catalyzes the first step in hexosamine metabolism, converting fructose-6P into glucosamine-6P using glutamine as a nitrogen source. This is Glutamine--fructose-6-phosphate aminotransferase [isomerizing] from Rhizobium meliloti (strain 1021) (Ensifer meliloti).